The primary structure comprises 234 residues: Protein UL20 homolog (234 aa).

A run of 4 helical transmembrane segments spans residues 82–102 (VVLFGLSTFVLRPSCCLIFLF), 112–132 (FLILGTTITAFFYGTLMLEMY), 153–173 (IGALSMLGPIIFVAISYNMIF), and 191–211 (TSGFVIYLVMIASLAYSITSI).

It belongs to the alphaherpesvirinae UL20 family. Interacts with gK (via N-terminus); this interaction plays a role in the coordinate transport of UL20 and gK to the trans-Golgi network (TGN), and is required for their cell surface expression. Interacts with gB.

The protein resides in the virion. It is found in the host cell membrane. Its subcellular location is the host endosome membrane. It localises to the host Golgi apparatus membrane. The protein localises to the host nucleus membrane. Functionally, plays an essential role in egress of virus particles from the nucleus, cytoplasmic envelopment and virus-induced cell fusion. Forms a functional protein complex with gK and this interaction is absolutely essential for their coordinate intracellular transport, gK glycosylation, expression on host cell surface, and function. Together, they modulate gB-mediated virus-induced cell fusion and virion egress and therefore actively participate in these processes. The sequence is that of Protein UL20 homolog (MDV032) from Gallid herpesvirus 2 (strain Chicken/Md5/ATCC VR-987) (GaHV-2).